Here is a 280-residue protein sequence, read N- to C-terminus: Undecaprenyl-diphosphatase (280 aa).

The next 8 membrane-spanning stretches (helical) occupy residues 3 to 23, 45 to 65, 88 to 108, 115 to 135, 150 to 170, 191 to 211, 225 to 245, and 255 to 275; these read IILL…EFLP, VDLF…YDYW, QLGL…FTFA, LFNP…IFYV, VSLK…IPGT, AEFS…LDFI, VLGI…RLLV, and IFAW…WGFG.

The protein belongs to the UppP family.

The protein localises to the cell inner membrane. It carries out the reaction di-trans,octa-cis-undecaprenyl diphosphate + H2O = di-trans,octa-cis-undecaprenyl phosphate + phosphate + H(+). Functionally, catalyzes the dephosphorylation of undecaprenyl diphosphate (UPP). Confers resistance to bacitracin. The protein is Undecaprenyl-diphosphatase of Psychrobacter cryohalolentis (strain ATCC BAA-1226 / DSM 17306 / VKM B-2378 / K5).